A 428-amino-acid polypeptide reads, in one-letter code: PGL/p-HBAD biosynthesis glycosyltransferase MRA_2985 (428 aa).

A disordered region spans residues methionine 1 to alanine 23.

This sequence belongs to the UDP-glycosyltransferase family.

Its function is as follows. Involved in glycosylation steps downstream of mono-O-methyl-glycosyl-p-hydroxybenzoic acid derivative (p-HBAD I) and 2-O-methyl-rhamnosyl-phenolphthiocerol dimycocerosate (mycoside B) during the p-hydroxybenzoic acid derivatives (p-HBAD) and glycosylated phenolphthiocerol dimycocerosates (PGL) biosynthesis. This Mycobacterium tuberculosis (strain ATCC 25177 / H37Ra) protein is PGL/p-HBAD biosynthesis glycosyltransferase MRA_2985.